A 402-amino-acid polypeptide reads, in one-letter code: Endoglucanase 1 (402 aa).

Gln1 carries the pyrrolidone carboxylic acid modification. Cystine bridges form between Cys18–Cys24, Cys51–Cys73, and Cys63–Cys69. Residue Asn89 is glycosylated (N-linked (GlcNAc...) asparagine). Disulfide bonds link Cys140/Cys365, Cys172/Cys195, Cys176/Cys194, Cys215/Cys234, Cys223/Cys228, and Cys239/Cys315. The active-site Nucleophile is Glu197. Glu202 functions as the Proton donor in the catalytic mechanism. N-linked (GlcNAc...) asparagine glycosylation occurs at Asn247.

This sequence belongs to the glycosyl hydrolase 7 (cellulase C) family. In terms of assembly, monomer.

The protein resides in the secreted. The catalysed reaction is Endohydrolysis of (1-&gt;4)-beta-D-glucosidic linkages in cellulose, lichenin and cereal beta-D-glucans.. The biological conversion of cellulose to glucose generally requires three types of hydrolytic enzymes: (1) Endoglucanases which cut internal beta-1,4-glucosidic bonds; (2) Exocellobiohydrolases that cut the disaccharide cellobiose from the non-reducing end of the cellulose polymer chain; (3) Beta-1,4-glucosidases which hydrolyze the cellobiose and other short cello-oligosaccharides to glucose. This is Endoglucanase 1 (CEL7B) from Humicola insolens (Soft-rot fungus).